Here is a 609-residue protein sequence, read N- to C-terminus: Interleukin-1 receptor-associated kinase 3 (609 aa).

The Death domain maps to 41 to 106 (WRGLAERLSN…RAIHLIINYG (66 aa)). The residue at position 110 (Thr-110) is a Phosphothreonine. The 286-residue stretch at 178-463 (FHKDFLIGEG…SSLESTQPSL (286 aa)) folds into the Protein kinase domain. ATP-binding positions include 184–192 (IGEGEIFEV), Lys-205, 308–311 (SSAN), and Asp-324. The residue at position 480 (Ser-480) is a Phosphoserine.

Belongs to the protein kinase superfamily. TKL Ser/Thr protein kinase family. Pelle subfamily. Monomer. Homodimer. May interact with IRAK4 (when phosphorylated). Interacts (when phosphorylated at Thr-110) with PIN1 (via WW domain) in response to IL33-mediated (but not TLR4 ligand LPS) dendritic cell stimulation. In terms of tissue distribution, expressed in inflamed lung macrophages (at protein level). Expressed in dendritic cells (at protein level). Highly expressed in liver and thymus and at lower levels in heart, brain, spleen and kidney.

It localises to the cytoplasm. The protein resides in the nucleus. Functionally, putative inactive protein kinase which regulates signaling downstream of immune receptors including IL1R and Toll-like receptors. Inhibits dissociation of IRAK1 and IRAK4 from the Toll-like receptor signaling complex by either inhibiting the phosphorylation of IRAK1 and IRAK4 or stabilizing the receptor complex. Upon IL33-induced lung inflammation, positively regulates expression of IL6, CSF3, CXCL2 and CCL5 mRNAs in dendritic cells. This chain is Interleukin-1 receptor-associated kinase 3, found in Mus musculus (Mouse).